The chain runs to 529 residues: Fibroblast growth factor receptor-like 1 (529 aa).

The signal sequence occupies residues methionine 1–alanine 20. At alanine 21–proline 374 the chain is on the extracellular side. Ig-like C2-type domains follow at residues proline 25 to isoleucine 111, proline 143 to aspartate 233, and proline 242 to threonine 350. Cysteine 47 and cysteine 95 are oxidised to a cystine. Asparagine 107 carries an N-linked (GlcNAc...) asparagine glycan. A disordered region spans residues isoleucine 116–methionine 151. A disulfide bridge connects residues cysteine 168 and cysteine 217. N-linked (GlcNAc...) asparagine glycans are attached at residues asparagine 227, asparagine 251, and asparagine 289. Cysteines 264 and 334 form a disulfide. Residues valine 375 to cysteine 395 traverse the membrane as a helical segment. Over glutamine 396–serine 529 the chain is Cytoplasmic. Residues alanine 405–aspartate 427 are disordered.

Interacts with FGF2 with a low affinity. As to expression, highly expressed in the kidney, brain and lung. Weakly expressed in the muscle, thymus, lymph node, stomach, intestine, colon and liver. Expressed in fetal cartilaginous structures like the nasal cartilage, the ribs and the sternum as well as in the cartilaginous rudiments of developing bones such as the vertebrae and the pelvic bone. High expression is found in the muscles of the tongue and the diaphragm.

It localises to the cell membrane. Its function is as follows. Has a negative effect on cell proliferation. This Mus musculus (Mouse) protein is Fibroblast growth factor receptor-like 1 (Fgfrl1).